The sequence spans 340 residues: DNA-directed RNA polymerase subunit alpha (340 aa).

The tract at residues 1–238 is alpha N-terminal domain (alpha-NTD); it reads MVDPIVTKNW…EQLSIFINFD (238 aa). The tract at residues 255–340 is alpha C-terminal domain (alpha-CTD); sequence LNENLFRSVD…AAPQGGAPKV (86 aa).

This sequence belongs to the RNA polymerase alpha chain family. In terms of assembly, homodimer. The RNAP catalytic core consists of 2 alpha, 1 beta, 1 beta' and 1 omega subunit. When a sigma factor is associated with the core the holoenzyme is formed, which can initiate transcription.

The catalysed reaction is RNA(n) + a ribonucleoside 5'-triphosphate = RNA(n+1) + diphosphate. Functionally, DNA-dependent RNA polymerase catalyzes the transcription of DNA into RNA using the four ribonucleoside triphosphates as substrates. This chain is DNA-directed RNA polymerase subunit alpha, found in Anaeromyxobacter dehalogenans (strain 2CP-1 / ATCC BAA-258).